The following is a 245-amino-acid chain: tRNA pseudouridine synthase A (245 aa).

The active-site Nucleophile is the D52. Substrate is bound at residue Y111.

It belongs to the tRNA pseudouridine synthase TruA family. In terms of assembly, homodimer.

It carries out the reaction uridine(38/39/40) in tRNA = pseudouridine(38/39/40) in tRNA. Functionally, formation of pseudouridine at positions 38, 39 and 40 in the anticodon stem and loop of transfer RNAs. The polypeptide is tRNA pseudouridine synthase A (Rickettsia bellii (strain RML369-C)).